The sequence spans 312 residues: Lipoyl synthase (312 aa).

The [4Fe-4S] cluster site is built by Cys37, Cys42, Cys48, Cys67, Cys71, Cys74, and Ser281. Positions 52 to 270 (RDGPGTATFM…AVAEREFDFL (219 aa)) constitute a Radical SAM core domain.

This sequence belongs to the radical SAM superfamily. Lipoyl synthase family. [4Fe-4S] cluster is required as a cofactor.

It localises to the cytoplasm. It catalyses the reaction [[Fe-S] cluster scaffold protein carrying a second [4Fe-4S](2+) cluster] + N(6)-octanoyl-L-lysyl-[protein] + 2 oxidized [2Fe-2S]-[ferredoxin] + 2 S-adenosyl-L-methionine + 4 H(+) = [[Fe-S] cluster scaffold protein] + N(6)-[(R)-dihydrolipoyl]-L-lysyl-[protein] + 4 Fe(3+) + 2 hydrogen sulfide + 2 5'-deoxyadenosine + 2 L-methionine + 2 reduced [2Fe-2S]-[ferredoxin]. The protein operates within protein modification; protein lipoylation via endogenous pathway; protein N(6)-(lipoyl)lysine from octanoyl-[acyl-carrier-protein]: step 2/2. In terms of biological role, catalyzes the radical-mediated insertion of two sulfur atoms into the C-6 and C-8 positions of the octanoyl moiety bound to the lipoyl domains of lipoate-dependent enzymes, thereby converting the octanoylated domains into lipoylated derivatives. The sequence is that of Lipoyl synthase from Halorubrum lacusprofundi (strain ATCC 49239 / DSM 5036 / JCM 8891 / ACAM 34).